The primary structure comprises 490 residues: Betaine aldehyde dehydrogenase (490 aa).

Residues I27 and D93 each contribute to the K(+) site. 150–152 is a binding site for NAD(+); it reads GAW. The active-site Charge relay system is K162. 176–179 is a binding site for NAD(+); the sequence is KPSE. K(+) is bound at residue V180. 230-233 serves as a coordination point for NAD(+); sequence GTDT. L246 serves as a coordination point for K(+). E252 functions as the Proton acceptor in the catalytic mechanism. NAD(+) is bound by residues G254, C286, and E387. C286 acts as the Nucleophile in catalysis. At C286 the chain carries Cysteine sulfenic acid (-SOH). Residues K457 and G460 each coordinate K(+). E464 acts as the Charge relay system in catalysis.

It belongs to the aldehyde dehydrogenase family. In terms of assembly, dimer of dimers. It depends on K(+) as a cofactor.

The catalysed reaction is betaine aldehyde + NAD(+) + H2O = glycine betaine + NADH + 2 H(+). Its pathway is amine and polyamine biosynthesis; betaine biosynthesis via choline pathway; betaine from betaine aldehyde: step 1/1. Involved in the biosynthesis of the osmoprotectant glycine betaine. Catalyzes the irreversible oxidation of betaine aldehyde to the corresponding acid. The sequence is that of Betaine aldehyde dehydrogenase from Pseudomonas fluorescens (strain SBW25).